The sequence spans 615 residues: Semenogelin-1 (615 aa).

Residues 1–23 (MKPIIFLVLSLLLILEKQAAVMG) form the signal peptide. At Gln-24 the chain carries Pyrrolidone carboxylic acid. 3 disordered regions span residues 24-118 (QKGG…EHGK), 133-160 (GHAP…SQDS), and 172-585 (GKEQ…HRSY). Over residues 34–46 (SESSQFPHGQKGQ) the composition is skewed to polar residues. Basic and acidic residues predominate over residues 50-80 (ARKDKQHAESKRSVSIEHTYHVDIPDHDQTR). Positions 81–91 (TSKQYDLNAQN) are enriched in polar residues. Over residues 107–118 (FNHKQEGREHGK) the composition is skewed to basic and acidic residues. Polar residues-rich tracts occupy residues 138–160 (GTQN…SQDS), 177–196 (SVSG…SPVL), and 209–224 (TQNS…NVNE). N-linked (GlcNAc...) asparagine glycans are attached at residues Asn-148, Asn-184, and Asn-223. A compositionally biased stretch (basic and acidic residues) spans 241-253 (QEDRLQHGSKDVF). Polar residues predominate over residues 254–265 (SKNQNQTRNPNQ). N-linked (GlcNAc...) asparagine glycosylation is found at Asn-258 and Asn-275. Positions 283-300 (TEERRPNHGEKGIQKDAS) are enriched in basic and acidic residues. Residue Asn-306 is glycosylated (N-linked (GlcNAc...) asparagine). Basic and acidic residues predominate over residues 308-317 (TEDKMHDKSQ). Asn-332 carries an N-linked (GlcNAc...) asparagine glycan. The span at 341–358 (TEERRPNHGEKGIQKDAS) shows a compositional bias: basic and acidic residues. Residue Asn-364 is glycosylated (N-linked (GlcNAc...) asparagine). The segment covering 366–375 (TEDKMHDKSQ) has biased composition (basic and acidic residues). Residue Asn-390 is glycosylated (N-linked (GlcNAc...) asparagine). Residues 399 to 416 (TEERRPNHGEKGIQKDAS) show a composition bias toward basic and acidic residues. N-linked (GlcNAc...) asparagine glycosylation is present at Asn-422. Residues 424–433 (TEDKMHDKSQ) are compositionally biased toward basic and acidic residues. Asn-448 carries an N-linked (GlcNAc...) asparagine glycan. Residues 457-474 (TEERRPNHGEKGIQKDAS) show a composition bias toward basic and acidic residues. N-linked (GlcNAc...) asparagine glycosylation is present at Asn-480. Residues 481–491 (KTEDKMHDKSQ) show a composition bias toward basic and acidic residues. A glycan (N-linked (GlcNAc...) asparagine) is linked at Asn-506. Basic and acidic residues predominate over residues 515–532 (TEERRPNHGEKGIQKDAS). A glycan (N-linked (GlcNAc...) asparagine) is linked at Asn-538. The span at 539–549 (KTEDEKHDKSQ) shows a compositional bias: basic and acidic residues. A compositionally biased stretch (polar residues) spans 550–563 (KQVTTPSQDQQSGQ).

It belongs to the semenogelin family. As to quaternary structure, occurs in disulfide-linked complexes. Transglutaminase substrate. In terms of processing, rapidly cleaved after ejaculation by KLK3/PSA, resulting in liquefaction of the semen coagulum and the progressive release of motile spermatozoa.

It localises to the secreted. Functionally, predominant protein in semen. It participates in the formation of a gel matrix entrapping the accessory gland secretions and ejaculated spermatozoa. Fragments of semenogelin and/or fragments of the related proteins may contribute to the activation of progressive sperm movements as the gel-forming proteins are fragmented by KLK3/PSA. This Saguinus oedipus (Cotton-top tamarin) protein is Semenogelin-1 (SEMG1).